Reading from the N-terminus, the 1005-residue chain is Probable beta-galactosidase A (1005 aa).

A signal peptide spans 1 to 18 (MKLLSVAAVALLAAQAAG). The substrate site is built by Tyr96, Asn140, Ala141, and Glu142. Asn156 carries an N-linked (GlcNAc...) asparagine glycan. Asn199 provides a ligand contact to substrate. Glu200 functions as the Proton donor in the catalytic mechanism. Cys205 and Cys206 form a disulfide bridge. Position 260 (Tyr260) interacts with substrate. A disulfide bond links Cys266 and Cys315. Catalysis depends on Glu298, which acts as the Nucleophile. Tyr364 lines the substrate pocket. 10 N-linked (GlcNAc...) asparagine glycosylation sites follow: Asn373, Asn402, Asn453, Asn478, Asn522, Asn622, Asn760, Asn777, Asn805, and Asn914.

It belongs to the glycosyl hydrolase 35 family.

The protein localises to the secreted. The enzyme catalyses Hydrolysis of terminal non-reducing beta-D-galactose residues in beta-D-galactosides.. In terms of biological role, cleaves beta-linked terminal galactosyl residues from gangliosides, glycoproteins, and glycosaminoglycans. The chain is Probable beta-galactosidase A (lacA) from Aspergillus flavus (strain ATCC 200026 / FGSC A1120 / IAM 13836 / NRRL 3357 / JCM 12722 / SRRC 167).